The chain runs to 284 residues: D-tagatose-1,6-bisphosphate aldolase subunit GatY (284 aa).

D82 functions as the Proton donor in the catalytic mechanism. H83 and H180 together coordinate Zn(2+). Position 181 (C181) interacts with dihydroxyacetone phosphate. H208 lines the Zn(2+) pocket. Dihydroxyacetone phosphate contacts are provided by residues 209 to 211 (GAS) and 230 to 233 (NVAT).

It belongs to the class II fructose-bisphosphate aldolase family. TagBP aldolase GatY subfamily. In terms of assembly, forms a complex with GatZ. It depends on Zn(2+) as a cofactor.

The catalysed reaction is D-tagatofuranose 1,6-bisphosphate = D-glyceraldehyde 3-phosphate + dihydroxyacetone phosphate. The protein operates within carbohydrate metabolism; D-tagatose 6-phosphate degradation; D-glyceraldehyde 3-phosphate and glycerone phosphate from D-tagatose 6-phosphate: step 2/2. In terms of biological role, catalytic subunit of the tagatose-1,6-bisphosphate aldolase GatYZ, which catalyzes the reversible aldol condensation of dihydroxyacetone phosphate (DHAP or glycerone-phosphate) with glyceraldehyde 3-phosphate (G3P) to produce tagatose 1,6-bisphosphate (TBP). Requires GatZ subunit for full activity and stability. Is involved in the catabolism of galactitol. The sequence is that of D-tagatose-1,6-bisphosphate aldolase subunit GatY from Salmonella paratyphi A (strain ATCC 9150 / SARB42).